The sequence spans 652 residues: Phosphomethylpyrimidine synthase (652 aa).

Substrate-binding positions include N257, M286, Y315, H351, 371–373 (SRG), 412–415 (DGLR), and E451. H455 contacts Zn(2+). Y478 contacts substrate. H519 contributes to the Zn(2+) binding site. Residues C599, C602, and C607 each contribute to the [4Fe-4S] cluster site.

It belongs to the ThiC family. Homodimer. The cofactor is [4Fe-4S] cluster.

The catalysed reaction is 5-amino-1-(5-phospho-beta-D-ribosyl)imidazole + S-adenosyl-L-methionine = 4-amino-2-methyl-5-(phosphooxymethyl)pyrimidine + CO + 5'-deoxyadenosine + formate + L-methionine + 3 H(+). The protein operates within cofactor biosynthesis; thiamine diphosphate biosynthesis. Its function is as follows. Catalyzes the synthesis of the hydroxymethylpyrimidine phosphate (HMP-P) moiety of thiamine from aminoimidazole ribotide (AIR) in a radical S-adenosyl-L-methionine (SAM)-dependent reaction. This chain is Phosphomethylpyrimidine synthase, found in Thiobacillus denitrificans (strain ATCC 25259 / T1).